A 97-amino-acid chain; its full sequence is Putative pterin-4-alpha-carbinolamine dehydratase (97 aa).

It belongs to the pterin-4-alpha-carbinolamine dehydratase family.

The catalysed reaction is (4aS,6R)-4a-hydroxy-L-erythro-5,6,7,8-tetrahydrobiopterin = (6R)-L-erythro-6,7-dihydrobiopterin + H2O. The protein is Putative pterin-4-alpha-carbinolamine dehydratase of Christiangramia forsetii (strain DSM 17595 / CGMCC 1.15422 / KT0803) (Gramella forsetii).